The primary structure comprises 529 residues: Bifunctional purine biosynthesis protein PurH (529 aa).

Positions 1–148 (MQQRRPVRRA…KNHKDVAIVV (148 aa)) constitute an MGS-like domain.

This sequence belongs to the PurH family.

It carries out the reaction (6R)-10-formyltetrahydrofolate + 5-amino-1-(5-phospho-beta-D-ribosyl)imidazole-4-carboxamide = 5-formamido-1-(5-phospho-D-ribosyl)imidazole-4-carboxamide + (6S)-5,6,7,8-tetrahydrofolate. The enzyme catalyses IMP + H2O = 5-formamido-1-(5-phospho-D-ribosyl)imidazole-4-carboxamide. Its pathway is purine metabolism; IMP biosynthesis via de novo pathway; 5-formamido-1-(5-phospho-D-ribosyl)imidazole-4-carboxamide from 5-amino-1-(5-phospho-D-ribosyl)imidazole-4-carboxamide (10-formyl THF route): step 1/1. The protein operates within purine metabolism; IMP biosynthesis via de novo pathway; IMP from 5-formamido-1-(5-phospho-D-ribosyl)imidazole-4-carboxamide: step 1/1. This is Bifunctional purine biosynthesis protein PurH from Salmonella agona (strain SL483).